A 670-amino-acid polypeptide reads, in one-letter code: Probable membrane-anchored ferredoxin csal_0991 (670 aa).

The next 5 helical transmembrane spans lie at 2 to 22 (LDILLPILIFSALALAAIGAV), 68 to 90 (VATAGGFVAAMGLAIVVHGLGLA), 94 to 113 (LGWLLLAASATMFAGSLFVA), 135 to 155 (LMAFSLGIFVVTLPAVGVLPA), and 159 to 179 (GWLVALVLAAVVAWGLAELVF). 4Fe-4S ferredoxin-type domains are found at residues 241–271 (WNQLLGFDACVQCGRCEAVCPAFAAGQPLNP) and 316–347 (GTALVDAETLWSCTTCRACVEECPMMIEHVDA). 8 residues coordinate [4Fe-4S] cluster: cysteine 250, cysteine 253, cysteine 256, cysteine 260, cysteine 328, cysteine 331, cysteine 334, and cysteine 338. The segment at 648–670 (NTPPATPASHDTAASQATEEVLS) is disordered. The segment covering 659-670 (TAASQATEEVLS) has biased composition (polar residues).

Requires [4Fe-4S] cluster as cofactor.

Its subcellular location is the cell inner membrane. Participates in the electron transfer process during N,N-dimethylglycine (DMG) degradation to sarcosine. Probably transfers the electrons from N,N-dimethylglycine/sarcosine dehydrogenase (DMGDH) to the electron transfer flavoprotein (ETF) EtfA-EtfB. This Chromohalobacter salexigens (strain ATCC BAA-138 / DSM 3043 / CIP 106854 / NCIMB 13768 / 1H11) protein is Probable membrane-anchored ferredoxin csal_0991.